A 772-amino-acid polypeptide reads, in one-letter code: Semaphorin-3A (772 aa).

Residues 1–20 (MGWFTGIACLFWGILLTARA) form the signal peptide. The Sema domain occupies 31 to 514 (RLKLSYKEML…STAGVAQLPL (484 aa)). Asn53 carries an N-linked (GlcNAc...) asparagine glycan. Cys103 and Cys114 are joined by a disulfide. An N-linked (GlcNAc...) asparagine glycan is attached at Asn125. 4 cysteine pairs are disulfide-bonded: Cys132–Cys141, Cys269–Cys381, Cys293–Cys341, and Cys517–Cys535. The region spanning 577–665 (HGHSLEERII…GFMQTLLKVT (89 aa)) is the Ig-like C2-type domain. The N-linked (GlcNAc...) asparagine glycan is linked to Asn591. Residues Cys650 and Cys723 are joined by a disulfide bond. Residues 677 to 691 (LLHKDDDGDGSKTKE) show a composition bias toward basic and acidic residues. Disordered regions lie at residues 677–698 (LLHK…SMTP) and 729–772 (RDRK…PRSV). Residues 729 to 738 (RDRKQRRQRP) are compositionally biased toward basic residues. Over residues 750–772 (HMQESKKGRNRRTHEFERAPRSV) the composition is skewed to basic and acidic residues.

It belongs to the semaphorin family. Interacts with PLXND1. As to expression, expressed in the dorsal root ganglia.

It localises to the secreted. Its function is as follows. May be involved in guiding growing axons towards their targets by forming a molecular boundary that instructs axons to engage in the formation of specific nerve tracts. Binds to neuropilin. Involved in the development of the olfactory system and in neuronal control of puberty. In Rattus norvegicus (Rat), this protein is Semaphorin-3A (Sema3a).